The primary structure comprises 30 residues: Cycloviolin-C (30 aa).

Residues 1 to 30 (GIPCGESCVFIPCLTTVAGCSCKNKVCYRN) constitute a cross-link (cyclopeptide (Gly-Asn)). Intrachain disulfides connect cysteine 4–cysteine 20, cysteine 8–cysteine 22, and cysteine 13–cysteine 27.

In terms of processing, this is a cyclic peptide.

In terms of biological role, probably participates in a plant defense mechanism. Has anti-HIV activity. In Leonia cymosa (Sacha uba), this protein is Cycloviolin-C.